Reading from the N-terminus, the 373-residue chain is Queuine tRNA-ribosyltransferase (373 aa).

Aspartate 93 serves as the catalytic Proton acceptor. Substrate contacts are provided by residues 93 to 97, aspartate 147, glutamine 189, and glycine 216; that span reads DSGGF. Residues 247 to 253 are RNA binding; sequence GVGAPED. The Nucleophile role is filled by aspartate 266. Residues 271–275 are RNA binding; important for wobble base 34 recognition; sequence TRIAR. Residues cysteine 304, cysteine 306, cysteine 309, and histidine 335 each coordinate Zn(2+).

Belongs to the queuine tRNA-ribosyltransferase family. In terms of assembly, homodimer. Within each dimer, one monomer is responsible for RNA recognition and catalysis, while the other monomer binds to the replacement base PreQ1. Zn(2+) serves as cofactor.

The catalysed reaction is 7-aminomethyl-7-carbaguanine + guanosine(34) in tRNA = 7-aminomethyl-7-carbaguanosine(34) in tRNA + guanine. Its pathway is tRNA modification; tRNA-queuosine biosynthesis. Functionally, catalyzes the base-exchange of a guanine (G) residue with the queuine precursor 7-aminomethyl-7-deazaguanine (PreQ1) at position 34 (anticodon wobble position) in tRNAs with GU(N) anticodons (tRNA-Asp, -Asn, -His and -Tyr). Catalysis occurs through a double-displacement mechanism. The nucleophile active site attacks the C1' of nucleotide 34 to detach the guanine base from the RNA, forming a covalent enzyme-RNA intermediate. The proton acceptor active site deprotonates the incoming PreQ1, allowing a nucleophilic attack on the C1' of the ribose to form the product. After dissociation, two additional enzymatic reactions on the tRNA convert PreQ1 to queuine (Q), resulting in the hypermodified nucleoside queuosine (7-(((4,5-cis-dihydroxy-2-cyclopenten-1-yl)amino)methyl)-7-deazaguanosine). The chain is Queuine tRNA-ribosyltransferase from Halothermothrix orenii (strain H 168 / OCM 544 / DSM 9562).